A 582-amino-acid chain; its full sequence is Arginine--tRNA ligase (582 aa).

Residues 128–138 (PNLAKEMHVGH) carry the 'HIGH' region motif.

It belongs to the class-I aminoacyl-tRNA synthetase family. As to quaternary structure, monomer.

The protein resides in the cytoplasm. The catalysed reaction is tRNA(Arg) + L-arginine + ATP = L-arginyl-tRNA(Arg) + AMP + diphosphate. This Colwellia psychrerythraea (strain 34H / ATCC BAA-681) (Vibrio psychroerythus) protein is Arginine--tRNA ligase.